The following is a 401-amino-acid chain: Flagellin D (401 aa).

It belongs to the bacterial flagellin family.

Its subcellular location is the secreted. It is found in the bacterial flagellum. Flagellin is the subunit protein which polymerizes to form the filaments of bacterial flagella. The protein is Flagellin D (flaD) of Rhizobium meliloti (strain 1021) (Ensifer meliloti).